We begin with the raw amino-acid sequence, 489 residues long: Cytochrome P450 2C70 (489 aa).

The N-terminal stretch at 1–27 (MALFIFLGIWLSCLVFLFLWNQHHVRR) is a signal peptide. C434 contributes to the heme binding site.

The protein belongs to the cytochrome P450 family. Heme serves as cofactor.

It is found in the endoplasmic reticulum membrane. It localises to the microsome membrane. It carries out the reaction chenodeoxycholate + reduced [NADPH--hemoprotein reductase] + O2 = alpha-muricholate + oxidized [NADPH--hemoprotein reductase] + H2O + H(+). The catalysed reaction is ursodeoxycholate + reduced [NADPH--hemoprotein reductase] + O2 = beta-muricholate + oxidized [NADPH--hemoprotein reductase] + H2O + H(+). In terms of biological role, a cytochrome P450 monooxygenase involved in muricholic acid (MCA) synthesis. Hydroxylates at the 6-beta position two major bile acids, chenodeoxycholic acid (CDCA) and ursodeoxycholic acid (UDCA) to form alpha-MCA and beta-MCA, respectively. May regulate NR1H4/farnesoid X receptor signaling, as taurine-conjugated MCAs are antagonists of NR1H4. Mechanistically, uses molecular oxygen inserting one oxygen atom into a substrate, and reducing the second into a water molecule, with two electrons provided by NADPH via cytochrome P450 reductase (CPR; NADPH-ferrihemoprotein reductase). This Rattus norvegicus (Rat) protein is Cytochrome P450 2C70.